The chain runs to 337 residues: Inositol 2-dehydrogenase (337 aa).

Belongs to the Gfo/Idh/MocA family. As to quaternary structure, homotetramer.

It carries out the reaction myo-inositol + NAD(+) = scyllo-inosose + NADH + H(+). Involved in the oxidation of myo-inositol (MI) to 2-keto-myo-inositol (2KMI or 2-inosose). The protein is Inositol 2-dehydrogenase of Klebsiella pneumoniae (strain 342).